The chain runs to 367 residues: Phosphoribosylaminoimidazole-succinocarboxamide synthase (367 aa).

It belongs to the SAICAR synthetase family.

It catalyses the reaction 5-amino-1-(5-phospho-D-ribosyl)imidazole-4-carboxylate + L-aspartate + ATP = (2S)-2-[5-amino-1-(5-phospho-beta-D-ribosyl)imidazole-4-carboxamido]succinate + ADP + phosphate + 2 H(+). The protein operates within purine metabolism; IMP biosynthesis via de novo pathway; 5-amino-1-(5-phospho-D-ribosyl)imidazole-4-carboxamide from 5-amino-1-(5-phospho-D-ribosyl)imidazole-4-carboxylate: step 1/2. This is Phosphoribosylaminoimidazole-succinocarboxamide synthase from Colwellia psychrerythraea (strain 34H / ATCC BAA-681) (Vibrio psychroerythus).